The sequence spans 92 residues: Large ribosomal subunit protein eL43 (92 aa).

The C4-type zinc-finger motif lies at 39-60; sequence CDFCGKYGMKRQAVGIWCCKGC.

The protein belongs to the eukaryotic ribosomal protein eL43 family.

The sequence is that of Large ribosomal subunit protein eL43 (RPL37a) from Ostreococcus tauri.